The primary structure comprises 394 residues: MAATMTVEEVRKAQRAEGPATVLAIGTATPANCVYQADYPDYYFKITKSDHMADLKEKFKRMCDKSQIRKRYMHLTEEILQDNPNMCAYMAPSLDARQDIVVVEVPKLGKAAAQKAIKEWGQPRSKITHLVFCTTSGVDMPGADYQLTKMLGLRPSVKRLMMYQQGCFAGGTVLRLAKDLAENNRGARVLVVCSEITAVTFRGPHESHLDSLVGQALFGDGAAAVIIGADPDESIERPLFQLVSASQTILPDSEGAIDGHLREVGLTFHLLKDVPGLISKNIERALEDAFKPLGIDDWNSVFWIAHPGGPAILDMVEAKVNLNKERMRATRHVLSEYGNMSSACVLFIMDEMRKRSAEDGHTTTGEGMDWGVLFGFGPGLTVETVVLHSVPVTA.

Cys167 is an active-site residue.

The protein belongs to the thiolase-like superfamily. Chalcone/stilbene synthases family.

The catalysed reaction is (E)-4-coumaroyl-CoA + 3 malonyl-CoA + 3 H(+) = 2',4,4',6'-tetrahydroxychalcone + 3 CO2 + 4 CoA. Its pathway is secondary metabolite biosynthesis; flavonoid biosynthesis. Functionally, the primary product of this enzyme is 4,2',4',6'-tetrahydroxychalcone (also termed naringenin-chalcone or chalcone) which can under specific conditions spontaneously isomerize into naringenin. The sequence is that of Chalcone synthase 2 (CHS2) from Secale cereale (Rye).